Here is an 81-residue protein sequence, read N- to C-terminus: Protein K6 (81 aa).

This sequence belongs to the poxviridae K6 protein family.

This chain is Protein K6, found in Homo sapiens (Human).